Consider the following 269-residue polypeptide: uncharacterized protein (269 aa).

This is an uncharacterized protein from Acanthamoeba polyphaga (Amoeba).